Here is a 466-residue protein sequence, read N- to C-terminus: MSTGKVVQVIGPVVDIAFEAGQQVPDINNALVIDKGNGQSLTVEVSLALGDGVVRTIAMDSTDGLQRGMGVVDTGNPIEVPVGEATLGRVFNVLGEPVDNNGAIASDVRRSSIHRDAPKYDELTSSTEILETGIKVIDLLAPYVRGGKIGLFGGAGVGKTVLIQELIHNIAQGHNGISVFTGVGERTREGNDMYHEMEESGVLKQTAMVYGQMNEPPGARMRVALTGLTMAENFRDNEGKDVLLFIDNIFRFTQAGSEVSALLGRIPSAVGYQPTLATEMGQLQERITSTKKGSVTSIQAVYVPADDYTDPAPATTFAHLDATTNLERALTQQGIYPAVDPLASTSSALDPQIVGQEHYEVATEVQRTLQRYRELQDIISILGMDELSDEEKTTVNRARRIQFFLSQPFSVAETFTGINGEYVPVAETVRSFKEILDGKYDDLPEDAFRNVGAIEQVVEKAKTMAQ.

153 to 160 is an ATP binding site; it reads GGAGVGKT.

Belongs to the ATPase alpha/beta chains family. F-type ATPases have 2 components, CF(1) - the catalytic core - and CF(0) - the membrane proton channel. CF(1) has five subunits: alpha(3), beta(3), gamma(1), delta(1), epsilon(1). CF(0) has three main subunits: a(1), b(2) and c(9-12). The alpha and beta chains form an alternating ring which encloses part of the gamma chain. CF(1) is attached to CF(0) by a central stalk formed by the gamma and epsilon chains, while a peripheral stalk is formed by the delta and b chains.

The protein localises to the cell membrane. It carries out the reaction ATP + H2O + 4 H(+)(in) = ADP + phosphate + 5 H(+)(out). Produces ATP from ADP in the presence of a proton gradient across the membrane. The catalytic sites are hosted primarily by the beta subunits. The sequence is that of ATP synthase subunit beta from Leuconostoc mesenteroides subsp. mesenteroides (strain ATCC 8293 / DSM 20343 / BCRC 11652 / CCM 1803 / JCM 6124 / NCDO 523 / NBRC 100496 / NCIMB 8023 / NCTC 12954 / NRRL B-1118 / 37Y).